The sequence spans 599 residues: DNA primase (599 aa).

Residues 38–62 (CPFHDEKTPSFTVSEDKQICHCFGC) form a CHC2-type zinc finger. Positions 260-341 (DEIVLLEGFM…NVFVIQLPSG (82 aa)) constitute a Toprim domain. Residues glutamate 266, aspartate 310, and aspartate 312 each contribute to the Mg(2+) site.

It belongs to the DnaG primase family. In terms of assembly, monomer. Interacts with DnaB. Zn(2+) is required as a cofactor. Mg(2+) serves as cofactor.

It carries out the reaction ssDNA + n NTP = ssDNA/pppN(pN)n-1 hybrid + (n-1) diphosphate.. In terms of biological role, RNA polymerase that catalyzes the synthesis of short RNA molecules used as primers for DNA polymerase during DNA replication. The chain is DNA primase from Staphylococcus aureus (strain MRSA252).